We begin with the raw amino-acid sequence, 20 residues long: Cytochrome c oxidase subunit 6A2, mitochondrial (20 aa).

The tract at residues 1-20 (ASGAKGDHGGAGASTXXLLT) is disordered.

Belongs to the cytochrome c oxidase subunit 6A family. Component of the cytochrome c oxidase (complex IV, CIV), a multisubunit enzyme composed of 14 subunits. The complex is composed of a catalytic core of 3 subunits MT-CO1, MT-CO2 and MT-CO3, encoded in the mitochondrial DNA, and 11 supernumerary subunits COX4I, COX5A, COX5B, COX6A, COX6B, COX6C, COX7A, COX7B, COX7C, COX8 and NDUFA4, which are encoded in the nuclear genome. The complex exists as a monomer or a dimer and forms supercomplexes (SCs) in the inner mitochondrial membrane with NADH-ubiquinone oxidoreductase (complex I, CI) and ubiquinol-cytochrome c oxidoreductase (cytochrome b-c1 complex, complex III, CIII), resulting in different assemblies (supercomplex SCI(1)III(2)IV(1) and megacomplex MCI(2)III(2)IV(2)). As to expression, heart specific isoform.

It is found in the mitochondrion inner membrane. The protein operates within energy metabolism; oxidative phosphorylation. In terms of biological role, component of the cytochrome c oxidase, the last enzyme in the mitochondrial electron transport chain which drives oxidative phosphorylation. The respiratory chain contains 3 multisubunit complexes succinate dehydrogenase (complex II, CII), ubiquinol-cytochrome c oxidoreductase (cytochrome b-c1 complex, complex III, CIII) and cytochrome c oxidase (complex IV, CIV), that cooperate to transfer electrons derived from NADH and succinate to molecular oxygen, creating an electrochemical gradient over the inner membrane that drives transmembrane transport and the ATP synthase. Cytochrome c oxidase is the component of the respiratory chain that catalyzes the reduction of oxygen to water. Electrons originating from reduced cytochrome c in the intermembrane space (IMS) are transferred via the dinuclear copper A center (CU(A)) of subunit 2 and heme A of subunit 1 to the active site in subunit 1, a binuclear center (BNC) formed by heme A3 and copper B (CU(B)). The BNC reduces molecular oxygen to 2 water molecules unsing 4 electrons from cytochrome c in the IMS and 4 protons from the mitochondrial matrix. Plays a role in the assembly and stabilization of complex IV. This chain is Cytochrome c oxidase subunit 6A2, mitochondrial (COX6A2), found in Canis lupus familiaris (Dog).